We begin with the raw amino-acid sequence, 107 residues long: Ferredoxin 1 (107 aa).

4Fe-4S ferredoxin-type domains are found at residues 2 to 30 and 31 to 60; these read TFVV…YEGP and NFLV…SEDE. [3Fe-4S] cluster-binding residues include Cys9 and Cys17. [4Fe-4S] cluster contacts are provided by Cys21, Cys40, Cys43, and Cys46. Cys50 lines the [3Fe-4S] cluster pocket.

The cofactor is [4Fe-4S] cluster. Requires [3Fe-4S] cluster as cofactor.

In terms of biological role, ferredoxins are iron-sulfur proteins that transfer electrons in a wide variety of metabolic reactions. This chain is Ferredoxin 1 (fdxA), found in Pseudomonas aeruginosa (strain ATCC 15692 / DSM 22644 / CIP 104116 / JCM 14847 / LMG 12228 / 1C / PRS 101 / PAO1).